The primary structure comprises 216 residues: NKG2-D type II integral membrane protein (216 aa).

Residues 1–51 (MGWIRGRRSRHSWEMSEFHNYNLDLKKSDFSTRWQKQRCPVVKSKCRENAS) are Cytoplasmic-facing. Residues 52–72 (PFFFCCFIAVAMGIRFIIMVT) traverse the membrane as a helical; Signal-anchor for type II membrane protein segment. At 73-216 (IWSAVFLNSL…NTYICMQRTV (144 aa)) the chain is on the extracellular side. 2 cysteine pairs are disulfide-bonded: C96–C105 and C99–C110. In terms of domain architecture, C-type lectin spans 98-213 (PCPKNWICYK…STPNTYICMQ (116 aa)). N-linked (GlcNAc...) asparagine glycosylation is found at N115, N131, N163, and N202. Disulfide bonds link C127-C211 and C189-C203.

In terms of assembly, homodimer; disulfide-linked. Heterohexamer composed of two subunits of KLRK1 and four subunits of HCST/DAP10. Interacts (via transmembrane domain) with HCST/DAP10 (via transmembrane domain); the interaction is required for KLRK1 NK cell surface and induces NK cell-mediated cytotoxicity. Can form disulfide-bonded heterodimer with CD94. Interacts with CEACAM1; recruits PTPN6 that dephosphorylates VAV1. Natural killer cells.

The protein localises to the cell membrane. Its function is as follows. Functions as an activating and costimulatory receptor involved in immunosurveillance upon binding to various cellular stress-inducible ligands displayed at the surface of autologous tumor cells and virus-infected cells. Provides both stimulatory and costimulatory innate immune responses on activated killer (NK) cells, leading to cytotoxic activity. Acts as a costimulatory receptor for T-cell receptor (TCR) in CD8(+) T-cell-mediated adaptive immune responses by amplifying T-cell activation. Stimulates perforin-mediated elimination of ligand-expressing tumor cells. Signaling involves calcium influx, culminating in the expression of TNF-alpha. Participates in NK cell-mediated bone marrow graft rejection. May play a regulatory role in differentiation and survival of NK cells. Binds to ligands belonging to various subfamilies of MHC class I-related glycoproteins. This is NKG2-D type II integral membrane protein (KLRK1) from Pan troglodytes (Chimpanzee).